The primary structure comprises 280 residues: Putative pyruvate, phosphate dikinase regulatory protein (280 aa).

ADP is bound at residue 154–161 (GVSRTSKT).

Belongs to the pyruvate, phosphate/water dikinase regulatory protein family. PDRP subfamily.

The catalysed reaction is N(tele)-phospho-L-histidyl/L-threonyl-[pyruvate, phosphate dikinase] + ADP = N(tele)-phospho-L-histidyl/O-phospho-L-threonyl-[pyruvate, phosphate dikinase] + AMP + H(+). It carries out the reaction N(tele)-phospho-L-histidyl/O-phospho-L-threonyl-[pyruvate, phosphate dikinase] + phosphate + H(+) = N(tele)-phospho-L-histidyl/L-threonyl-[pyruvate, phosphate dikinase] + diphosphate. Bifunctional serine/threonine kinase and phosphorylase involved in the regulation of the pyruvate, phosphate dikinase (PPDK) by catalyzing its phosphorylation/dephosphorylation. In Nitrobacter winogradskyi (strain ATCC 25391 / DSM 10237 / CIP 104748 / NCIMB 11846 / Nb-255), this protein is Putative pyruvate, phosphate dikinase regulatory protein.